A 237-amino-acid polypeptide reads, in one-letter code: uncharacterized protein (237 aa).

The region spanning 13 to 218 is the DPCK domain; it reads VVGLSGGVAT…KSWKPYIFRV (206 aa). 18–25 lines the ATP pocket; the sequence is GGVATGKS.

Belongs to the CoaE family.

This is an uncharacterized protein from Caenorhabditis elegans.